A 1676-amino-acid polypeptide reads, in one-letter code: Protein TIC 214 (1676 aa).

Helical transmembrane passes span 23 to 43 (AGPLIILGIYYGFLITLPIAP), 71 to 91 (GILIAAISGLTVSQLAFFLSI), 96 to 116 (LYMIWLKPHLLTLLVLPYMFF), 145 to 165 (AFLDSFLFQALNPVLLPSPVM), 179 to 199 (VSLFILGTAIGWLGGQIMFVL), and 226 to 246 (IFPPIVFGLCLAYMGRAPVSF).

This sequence belongs to the TIC214 family. Part of the Tic complex.

The protein localises to the plastid. Its subcellular location is the chloroplast inner membrane. Involved in protein precursor import into chloroplasts. May be part of an intermediate translocation complex acting as a protein-conducting channel at the inner envelope. This is Protein TIC 214 from Zygnema circumcarinatum (Green alga).